The primary structure comprises 1912 residues: Vitellogenin-1 (1912 aa).

Residues 1 to 15 form the signal peptide; it reads MRGLISALVLTLVGS. The region spanning 24-663 is the Vitellogenin domain; sequence FGENKVYTYN…AGSLIPTMAV (640 aa). Residue N163 is glycosylated (N-linked (GlcNAc...) asparagine). The tract at residues 948-972 is disordered; sequence DSASGETDNIRDRQSVEDVSSGNSF. The N-linked (GlcNAc...) asparagine glycan is linked to N991. Disordered stretches follow at residues 1080 to 1329 and 1351 to 1432; these read KILD…SYDI and HWHS…RERN. 2 stretches are compositionally biased toward low complexity: residues 1092–1124 and 1150–1235; these read NSRSSSSSASSISESSESTTSTPSSSDSDNRAS and SSSS…SSSK. A glycan (N-linked (GlcNAc...) asparagine) is linked at N1206. Residues 1259–1269 are compositionally biased toward basic and acidic residues; that stretch reads EGERSVHEQKQ. The span at 1273 to 1299 shows a compositional bias: low complexity; it reads SSSSSSSRASSNSRSTSSSTSSSSESS. Over residues 1306 to 1316 the composition is skewed to basic and acidic residues; the sequence is WKQDREAETKR. Over residues 1319–1328 the composition is skewed to polar residues; it reads SQFNSHSSYD. Low complexity predominate over residues 1357-1381; that stretch reads RTSSSSSSSSSESGSSHSNSSSSDS. N-linked (GlcNAc...) asparagine glycosylation is present at N1375. The segment covering 1397-1409 has biased composition (basic residues); it reads SHRHGEKAAHSSR. Residues 1640–1818 form the VWFD domain; that stretch reads STCEVSKGDF…SWVLLEETCS (179 aa). Disulfide bonds link C1642–C1781 and C1665–C1817. N-linked (GlcNAc...) asparagine glycosylation is found at N1662, N1698, and N1703.

Post-translationally, phosvitin, an egg yolk storage protein, is one of the most highly phosphorylated (10%) proteins in nature. In terms of processing, cathepsin D is responsible for intraoocytic processing of vitellogenin. May contain intrachain disulfide bonds. In terms of tissue distribution, produced by the liver, secreted into the blood and then sequestered by receptor mediated endocytosis into growing oocytes, where it is generally cleaved, giving rise to the respective yolk components.

Functionally, precursor of the egg-yolk proteins that are sources of nutrients during early development of oviparous organisms. Phosvitin is believed to be of importance in sequestering calcium, iron and other cations for the developing embryo. The protein is Vitellogenin-1 (VTG1) of Gallus gallus (Chicken).